Reading from the N-terminus, the 428-residue chain is MLDPKFLRNELEVTAERLATRGFILDVERLGKLEEKRKSLQVSTEELQASRNAISKSIGQAKAKGEDVAPIMAKVGTLGAELDAKKVELAALLDELNAIAMSVPNLPDESAPIGADESENVEIRRWGTPKEFNFEVKDHVELGETLGGLDFKNAVKLTGSRFIIMKGQIARMHRALAQFMLDLHTTEHGYTEAYVPLLVNEDSLLGTGQLPKFGEDLFHTKPATEEGQGLSLIPTAEVPLTNIARDSIIDEDDLPVMMTAHTPCFRSEAGSYGRDTRGLIRQHQFDKVELVQLVKPEDSMQALEELTGHAETVLQKLGLPYRTVVLCTGDMGFGAAKTFDIEVWLPAQDTFREISSCSNMQDFQSRRMQARFKAKSAKKPSLLHTLNGSGLAVGRTLVAVLENYQNEDGSITVPEVLRGYMGGLEKIG.

235 to 237 (TAE) lines the L-serine pocket. 266–268 (RSE) contributes to the ATP binding site. Glutamate 289 contributes to the L-serine binding site. 353-356 (EISS) contributes to the ATP binding site. Residue serine 389 participates in L-serine binding.

This sequence belongs to the class-II aminoacyl-tRNA synthetase family. Type-1 seryl-tRNA synthetase subfamily. In terms of assembly, homodimer. The tRNA molecule binds across the dimer.

The protein localises to the cytoplasm. It carries out the reaction tRNA(Ser) + L-serine + ATP = L-seryl-tRNA(Ser) + AMP + diphosphate + H(+). The catalysed reaction is tRNA(Sec) + L-serine + ATP = L-seryl-tRNA(Sec) + AMP + diphosphate + H(+). Its pathway is aminoacyl-tRNA biosynthesis; selenocysteinyl-tRNA(Sec) biosynthesis; L-seryl-tRNA(Sec) from L-serine and tRNA(Sec): step 1/1. Its function is as follows. Catalyzes the attachment of serine to tRNA(Ser). Is also able to aminoacylate tRNA(Sec) with serine, to form the misacylated tRNA L-seryl-tRNA(Sec), which will be further converted into selenocysteinyl-tRNA(Sec). This Shewanella piezotolerans (strain WP3 / JCM 13877) protein is Serine--tRNA ligase.